The following is a 342-amino-acid chain: Dihydroorotate dehydrogenase (quinone) (342 aa).

FMN-binding positions include 65–69 (AGLDK) and threonine 89. Lysine 69 serves as a coordination point for substrate. 114 to 118 (NRMGF) lines the substrate pocket. FMN-binding residues include asparagine 142 and asparagine 175. Asparagine 175 contacts substrate. The active-site Nucleophile is serine 178. Asparagine 180 serves as a coordination point for substrate. The FMN site is built by lysine 220 and threonine 248. A substrate-binding site is contributed by 249–250 (NT). FMN contacts are provided by residues glycine 271, glycine 300, and 321-322 (YT).

The protein belongs to the dihydroorotate dehydrogenase family. Type 2 subfamily. In terms of assembly, monomer. FMN is required as a cofactor.

Its subcellular location is the cell membrane. It carries out the reaction (S)-dihydroorotate + a quinone = orotate + a quinol. It functions in the pathway pyrimidine metabolism; UMP biosynthesis via de novo pathway; orotate from (S)-dihydroorotate (quinone route): step 1/1. Functionally, catalyzes the conversion of dihydroorotate to orotate with quinone as electron acceptor. This chain is Dihydroorotate dehydrogenase (quinone), found in Burkholderia pseudomallei (strain K96243).